A 406-amino-acid chain; its full sequence is Probable 4-hydroxyphenylpyruvate dioxygenase 2 (406 aa).

2 consecutive VOC domains span residues 22-174 (GFDH…LINR) and 205-363 (EIDH…IFSK). H208, H291, and E374 together coordinate Fe cation.

It belongs to the 4HPPD family. Fe cation serves as cofactor.

It catalyses the reaction 3-(4-hydroxyphenyl)pyruvate + O2 = homogentisate + CO2. It functions in the pathway amino-acid degradation; L-phenylalanine degradation; acetoacetate and fumarate from L-phenylalanine: step 3/6. This is Probable 4-hydroxyphenylpyruvate dioxygenase 2 from Aspergillus fumigatus (strain ATCC MYA-4609 / CBS 101355 / FGSC A1100 / Af293) (Neosartorya fumigata).